The primary structure comprises 260 residues: BTB/POZ domain-containing protein KCTD21 (260 aa).

One can recognise a BTB domain in the interval 3–72 (DPITLNVGGK…LRTSHLDLPE (70 aa)). Positions 88–112 (QVQPLIEALQEKEVELSKAEKNAML) form a coiled coil.

In terms of assembly, homopentamer. Interacts with KCTD11; KCTD21 and KCTD11 may associate in pentameric assemblies. Interacts (via BTB domain) with CUL3; indicative for a participation in a BCR (BTB-CUL3-RBX1) E3 ubiquitin-protein ligase complex. As to expression, highly expressed in cerebellum and brain. Expressed in adult cerebellum (at protein level).

It participates in protein modification; protein ubiquitination. In terms of biological role, probable substrate-specific adapter of a BCR (BTB-CUL3-RBX1) E3 ubiquitin-protein ligase complex mediating the ubiquitination and subsequent proteasomal degradation of target proteins. Promotes the ubiquitination of HDAC1. Can function as antagonist of the Hedgehog pathway by affecting the nuclear transfer of transcription factor GLI1; the function probably occurs via HDAC1 down-regulation, keeping GLI1 acetylated and inactive. Inhibits cell growth and tumorigenicity of medulloblastoma (MDB). This Mus musculus (Mouse) protein is BTB/POZ domain-containing protein KCTD21 (Kctd21).